Here is a 244-residue protein sequence, read N- to C-terminus: Methylthioribulose-1-phosphate dehydratase (244 aa).

Cysteine 89 is a substrate binding site. Residues histidine 107 and histidine 109 each coordinate Zn(2+). The Proton donor/acceptor role is filled by glutamate 130. Histidine 192 is a Zn(2+) binding site.

The protein belongs to the aldolase class II family. MtnB subfamily. The cofactor is Zn(2+).

It localises to the cytoplasm. It catalyses the reaction 5-(methylsulfanyl)-D-ribulose 1-phosphate = 5-methylsulfanyl-2,3-dioxopentyl phosphate + H2O. Its pathway is amino-acid biosynthesis; L-methionine biosynthesis via salvage pathway; L-methionine from S-methyl-5-thio-alpha-D-ribose 1-phosphate: step 2/6. Functionally, catalyzes the dehydration of methylthioribulose-1-phosphate (MTRu-1-P) into 2,3-diketo-5-methylthiopentyl-1-phosphate (DK-MTP-1-P). This is Methylthioribulose-1-phosphate dehydratase from Saccharomyces cerevisiae (strain AWRI1631) (Baker's yeast).